An 884-amino-acid polypeptide reads, in one-letter code: Alanine--tRNA ligase (884 aa).

The Zn(2+) site is built by histidine 562, histidine 566, cysteine 674, and histidine 678.

It belongs to the class-II aminoacyl-tRNA synthetase family. It depends on Zn(2+) as a cofactor.

The protein localises to the cytoplasm. The enzyme catalyses tRNA(Ala) + L-alanine + ATP = L-alanyl-tRNA(Ala) + AMP + diphosphate. In terms of biological role, catalyzes the attachment of alanine to tRNA(Ala) in a two-step reaction: alanine is first activated by ATP to form Ala-AMP and then transferred to the acceptor end of tRNA(Ala). Also edits incorrectly charged Ser-tRNA(Ala) and Gly-tRNA(Ala) via its editing domain. The chain is Alanine--tRNA ligase from Rhizobium etli (strain ATCC 51251 / DSM 11541 / JCM 21823 / NBRC 15573 / CFN 42).